A 655-amino-acid chain; its full sequence is Golgi integral membrane protein 4 (655 aa).

A lipid anchor (N-myristoyl glycine) is attached at Gly2. Over 2–12 the chain is Cytoplasmic; it reads GNGMCSRKQKR. Residues 13 to 33 traverse the membrane as a helical; Signal-anchor for type II membrane protein segment; that stretch reads IFQTLLLLTVVFGFLYGAMLY. The Lumenal portion of the chain corresponds to 34–655; that stretch reads LELQTQLRKA…AEKSHRRAEM (622 aa). The segment at 38-107 is golgi targeting; sequence TQLRKAEAVA…ETLNKGRQDS (70 aa). The stretch at 66 to 216 forms a coiled coil; that stretch reads EHRSRLEKSL…KQLKDTLNRI (151 aa). The segment at 80 to 175 is endosome targeting; the sequence is LEHKKAKEDF…QELSKLKETV (96 aa). Positions 122–145 are disordered; it reads KSQHEELRKQHSDLEEEHRKQGED. Basic and acidic residues predominate over residues 123–145; it reads SQHEELRKQHSDLEEEHRKQGED. Residues 176–220 are golgi targeting; it reads YNLREENRQLRKAHQDIHTQLQDVKTQVAEYKQLKDTLNRIPSFR. Residue Asn229 is glycosylated (N-linked (GlcNAc...) asparagine). 2 disordered regions span residues 256–275 and 285–655; these read QPNHEAGPRRMEEKPLSSMQ and EQNQ…RAEM. Composition is skewed to basic and acidic residues over residues 261 to 270, 290 to 307, 319 to 328, and 348 to 360; these read AGPRRMEEKP, EPREPEERQVEEEHRKAL, EHLEEEHDPS, and LDGHPQAEVEHST. At Ser328 the chain carries Phosphoserine. Residues 361-370 show a composition bias toward polar residues; the sequence is KAATNFQSPY. Over residues 381–398 the composition is skewed to basic and acidic residues; sequence ARRDEEAQRLREHQEALH. Low complexity-rich tracts occupy residues 399–423 and 433–442; these read QQRLHGQLLRQQQQQQFLAREMAQQ and QQHQEQLRQQ. The segment covering 468 to 508 has biased composition (basic and acidic residues); the sequence is AYDRDNQRQDEAEGDPGNRQELREPGHQEGDPEVEADRAAV. Ser540 carries the phosphoserine modification. The span at 567–589 shows a compositional bias: acidic residues; that stretch reads QQEDNVDEQYQDEGEEEVQEDLT. Phosphotyrosine is present on Tyr576. Thr589 carries the post-translational modification Phosphothreonine. Residues 590-620 are compositionally biased toward basic and acidic residues; sequence EEKKREMEHNVEETYGEHPDDKNNDGEEQGV. Tyr633 carries the phosphotyrosine modification. The segment covering 633–642 has biased composition (acidic residues); that stretch reads YEEEEDEEDG.

The protein belongs to the GOLIM4 family. Post-translationally, phosphorylated by c-AMP-dependent kinases most probably in its lumenal part. In terms of processing, O-glycosylated; modified by sialic acid residues. N-glycosylated; N-glycans are of the complex type and modified by sialic acid residues. In terms of tissue distribution, expressed by spermatozoa (at protein level).

The protein localises to the golgi apparatus. Its subcellular location is the golgi stack membrane. It is found in the endosome membrane. The protein resides in the membrane. Plays a role in endosome to Golgi protein trafficking; mediates protein transport along the late endosome-bypass pathway from the early endosome to the Golgi. The chain is Golgi integral membrane protein 4 (Golim4) from Mus musculus (Mouse).